A 570-amino-acid chain; its full sequence is piRNA biogenesis protein EXD1 (570 aa).

The region spanning 135–307 is the 3'-5' exonuclease domain; that stretch reads YTVIDQFQQK…LPPSLLKILA (173 aa). 2 stretches are compositionally biased toward basic and acidic residues: residues 433-442 and 453-465; these read DEKFLDKESK and PRKE…DSKN. The segment at 433–485 is disordered; sequence DEKFLDKESKQTTAKSQIVPPRKEGEAHKDSKNKPGCWESAGPEDPRAQKAHA.

Belongs to the EXD1 family. In terms of assembly, homodimer. Component of the PET complex, at least composed of EXD1, PIWIL2, TDRD12 and piRNAs.

It is found in the cytoplasm. Functionally, RNA-binding component of the PET complex, a multiprotein complex required for the processing of piRNAs during spermatogenesis. The piRNA metabolic process mediates the repression of transposable elements during meiosis by forming complexes composed of piRNAs and Piwi proteins and governs the methylation and subsequent repression of transposable elements, preventing their mobilization, which is essential for the germline integrity. The PET complex is required during the secondary piRNAs metabolic process for the PIWIL2 slicing-triggered loading of PIWIL4 piRNAs. In the PET complex, EXD1 probably acts as an RNA adapter. EXD1 is an inactive exonuclease. This Mus musculus (Mouse) protein is piRNA biogenesis protein EXD1 (Exd1).